The following is a 408-amino-acid chain: Peptidase T-like protein RB0614 (408 aa).

His80 provides a ligand contact to Zn(2+). Residue Asp82 is part of the active site. Residue Asp142 coordinates Zn(2+). Glu174 (proton acceptor) is an active-site residue. Zn(2+)-binding residues include Glu175, Asp198, and His380.

The protein belongs to the peptidase M20B family. Zn(2+) is required as a cofactor.

This chain is Peptidase T-like protein RB0614, found in Rhizobium meliloti (strain 1021) (Ensifer meliloti).